The primary structure comprises 313 residues: Protein-methionine-sulfoxide reductase catalytic subunit MsrP (313 aa).

The segment at residues 1–44 (MARWRPDTAEREATPEALYLRRREFLALGAAGAVGLLLPRGARA) is a signal peptide (tat-type signal). Residues N76, 79-80 (YE), C134, T169, N217, R222, and 233-235 (GAK) contribute to the Mo-molybdopterin site.

This sequence belongs to the MsrP family. In terms of assembly, heterodimer of a catalytic subunit (MsrP) and a heme-binding subunit (MsrQ). Requires Mo-molybdopterin as cofactor. In terms of processing, predicted to be exported by the Tat system. The position of the signal peptide cleavage has not been experimentally proven.

The protein localises to the periplasm. The catalysed reaction is L-methionyl-[protein] + a quinone + H2O = L-methionyl-(S)-S-oxide-[protein] + a quinol. It carries out the reaction L-methionyl-[protein] + a quinone + H2O = L-methionyl-(R)-S-oxide-[protein] + a quinol. Functionally, part of the MsrPQ system that repairs oxidized periplasmic proteins containing methionine sulfoxide residues (Met-O), using respiratory chain electrons. Thus protects these proteins from oxidative-stress damage caused by reactive species of oxygen and chlorine generated by the host defense mechanisms. MsrPQ is essential for the maintenance of envelope integrity under bleach stress, rescuing a wide series of structurally unrelated periplasmic proteins from methionine oxidation. The catalytic subunit MsrP is non-stereospecific, being able to reduce both (R-) and (S-) diastereoisomers of methionine sulfoxide. The sequence is that of Protein-methionine-sulfoxide reductase catalytic subunit MsrP from Anaeromyxobacter dehalogenans (strain 2CP-C).